A 120-amino-acid polypeptide reads, in one-letter code: U15-barytoxin-Tl1c (120 aa).

Positions 1 to 16 (MKLFMVLVASFAFAVA) are cleaved as a signal peptide. Disulfide bonds link cysteine 55/cysteine 73, cysteine 66/cysteine 79, cysteine 70/cysteine 118, and cysteine 72/cysteine 89.

Belongs to the neurotoxin 03 (Tx2) family. 03 subfamily. In terms of tissue distribution, expressed by the venom gland.

The protein localises to the secreted. Its function is as follows. Ion channel inhibitor. The chain is U15-barytoxin-Tl1c from Trittame loki (Brush-footed trapdoor spider).